Here is a 131-residue protein sequence, read N- to C-terminus: Small ribosomal subunit protein bS6 (131 aa).

The interval 96–131 (VTEASPMAKAKDERDSRRGPAGDRSYDEANAEEIAE) is disordered. Over residues 104–122 (KAKDERDSRRGPAGDRSYD) the composition is skewed to basic and acidic residues.

The protein belongs to the bacterial ribosomal protein bS6 family.

Functionally, binds together with bS18 to 16S ribosomal RNA. In Shewanella sp. (strain MR-4), this protein is Small ribosomal subunit protein bS6.